Reading from the N-terminus, the 249-residue chain is Adenylate kinase (249 aa).

ATP is bound at residue 43–48 (GAGKGT). The tract at residues 63 to 92 (ATGDMLRAQVAAKSALGVEAKKIMDQGGLV) is NMP. Residues Thr-64, Arg-69, 90-92 (GLV), 119-122 (GFPR), and Gln-126 each bind AMP. An LID region spans residues 160–197 (GRLVHPASGRSYHKLFNPPKKDMIDDVSGDALVQRSDD). ATP-binding positions include Arg-161 and 170-171 (SY). AMP is bound by residues Arg-194 and Arg-205. Gln-233 is a binding site for ATP.

This sequence belongs to the adenylate kinase family. AK2 subfamily. Monomer.

The protein localises to the cytoplasm. The protein resides in the cytosol. It is found in the mitochondrion intermembrane space. It carries out the reaction AMP + ATP = 2 ADP. Its function is as follows. Catalyzes the reversible transfer of the terminal phosphate group between ATP and AMP. Plays an important role in cellular energy homeostasis and in adenine nucleotide metabolism. Adenylate kinase activity is critical for regulation of the phosphate utilization and the AMP de novo biosynthesis pathways. The protein is Adenylate kinase of Debaryomyces hansenii (strain ATCC 36239 / CBS 767 / BCRC 21394 / JCM 1990 / NBRC 0083 / IGC 2968) (Yeast).